The sequence spans 186 residues: Interferon beta-3 (186 aa).

The N-terminal stretch at 1 to 21 (MTYRCLLPMVLLLCFSTTALS) is a signal peptide. Cysteines 52 and 161 form a disulfide. N-linked (GlcNAc...) asparagine glycans are attached at residues N131 and N173.

This sequence belongs to the alpha/beta interferon family. As to quaternary structure, monomer.

Its subcellular location is the secreted. Functionally, has antiviral, antibacterial and anticancer activities. The polypeptide is Interferon beta-3 (IFNB3) (Bos taurus (Bovine)).